The following is a 452-amino-acid chain: tRNA(Ile)-lysidine synthase (452 aa).

Position 27-32 (Ser-27–Ser-32) interacts with ATP.

Belongs to the tRNA(Ile)-lysidine synthase family.

It localises to the cytoplasm. The enzyme catalyses cytidine(34) in tRNA(Ile2) + L-lysine + ATP = lysidine(34) in tRNA(Ile2) + AMP + diphosphate + H(+). In terms of biological role, ligates lysine onto the cytidine present at position 34 of the AUA codon-specific tRNA(Ile) that contains the anticodon CAU, in an ATP-dependent manner. Cytidine is converted to lysidine, thus changing the amino acid specificity of the tRNA from methionine to isoleucine. This chain is tRNA(Ile)-lysidine synthase, found in Persephonella marina (strain DSM 14350 / EX-H1).